The following is a 603-amino-acid chain: Dual specificity protein phosphatase CDC14A (603 aa).

Residues 7-162 (ELIGACEFMK…GLQHGFFDFE (156 aa)) form an a region. The tract at residues 163 to 176 (TFDAEEYEHYERVE) is linker. The b stretch occupies residues 177–343 (NGDFNWIVPG…QGDIFRSKLK (167 aa)). In terms of domain architecture, Tyrosine-protein phosphatase spans 179-336 (DFNWIVPGKF…KQASLWVQGD (158 aa)). Residue Cys-278 is the Phosphocysteine intermediate of the active site. Ser-484 carries the phosphoserine modification. Polar residues predominate over residues 518 to 538 (NGSTQTPGRNYPELNNNQYTR). Positions 518-583 (NGSTQTPGRN…RPSFPGSLSS (66 aa)) are disordered. 2 stretches are compositionally biased toward low complexity: residues 539–558 (SSNS…LNSS) and 573–583 (LRPSFPGSLSS). Position 592 is a phosphoserine (Ser-592).

Belongs to the protein-tyrosine phosphatase family. Non-receptor class CDC14 subfamily. Interacts with KIF20A. Interaction is required to localize CDC14 to the midzone of the mitotic spindle. In terms of tissue distribution, expressed in the inner ear.

It is found in the nucleus. Its subcellular location is the cytoplasm. The protein localises to the cytoskeleton. It localises to the microtubule organizing center. The protein resides in the centrosome. It is found in the spindle. Its subcellular location is the cell projection. The protein localises to the kinocilium. It localises to the spindle pole. The protein resides in the stereocilium. The enzyme catalyses O-phospho-L-tyrosyl-[protein] + H2O = L-tyrosyl-[protein] + phosphate. It catalyses the reaction O-phospho-L-seryl-[protein] + H2O = L-seryl-[protein] + phosphate. It carries out the reaction O-phospho-L-threonyl-[protein] + H2O = L-threonyl-[protein] + phosphate. Its function is as follows. Dual-specificity phosphatase. Required for centrosome separation and productive cytokinesis during cell division. Dephosphorylates SIRT2 around early anaphase. May dephosphorylate the APC subunit FZR1/CDH1, thereby promoting APC-FZR1 dependent degradation of mitotic cyclins and subsequent exit from mitosis. Required for normal hearing. This is Dual specificity protein phosphatase CDC14A (Cdc14a) from Mus musculus (Mouse).